We begin with the raw amino-acid sequence, 74 residues long: Conotoxin Vt11.7 (74 aa).

Residues 1–26 (MMFRLTSVGCFLLVIVLLNVAVLTNA) form the signal peptide. 4 disulfides stabilise this stretch: Cys-28–Cys-42, Cys-35–Cys-47, Cys-41–Cys-51, and Cys-46–Cys-55. Positions 62 to 74 (AHGHGLLRFWGQR) are excised as a propeptide.

This sequence belongs to the conotoxin I2 superfamily. In terms of tissue distribution, expressed by the venom duct.

Its subcellular location is the secreted. This is Conotoxin Vt11.7 from Conus planorbis (Planorbis cone).